Reading from the N-terminus, the 347-residue chain is NADH-ubiquinone oxidoreductase chain 2 (347 aa).

Helical transmembrane passes span 1–21 (MNPL…MMVV), 25–45 (HWLL…PIMM), 59–79 (YLLT…INLM), 96–116 (TLMT…FWVP), 122–142 (IPLT…LSIL), 149–169 (INLH…GWGG), 178–198 (IMAY…LYNP), 200–220 (LTLL…MLFI), 237–257 (MPVI…LPPL), 274–294 (DMLI…YFYM), and 325–345 (LLPT…MLSI).

Belongs to the complex I subunit 2 family. In terms of assembly, core subunit of respiratory chain NADH dehydrogenase (Complex I) which is composed of 45 different subunits. Interacts with TMEM242.

It localises to the mitochondrion inner membrane. It carries out the reaction a ubiquinone + NADH + 5 H(+)(in) = a ubiquinol + NAD(+) + 4 H(+)(out). In terms of biological role, core subunit of the mitochondrial membrane respiratory chain NADH dehydrogenase (Complex I) which catalyzes electron transfer from NADH through the respiratory chain, using ubiquinone as an electron acceptor. Essential for the catalytic activity and assembly of complex I. The polypeptide is NADH-ubiquinone oxidoreductase chain 2 (Balaenoptera physalus (Fin whale)).